A 389-amino-acid chain; its full sequence is 26S proteasome non-ATPase regulatory subunit 6 (389 aa).

The 169-residue stretch at 193–361 (DFKQAAELFL…EIVETNRPDS (169 aa)) folds into the PCI domain.

This sequence belongs to the proteasome subunit S10 family. As to quaternary structure, component of the 19S proteasome regulatory particle complex. The 26S proteasome consists of a 20S core particle (CP) and two 19S regulatory subunits (RP). The regulatory particle is made of a lid composed of 9 subunits including PSMD6, a base containing 6 ATPases and few additional components.

In terms of biological role, component of the 26S proteasome, a multiprotein complex involved in the ATP-dependent degradation of ubiquitinated proteins. This complex plays a key role in the maintenance of protein homeostasis by removing misfolded or damaged proteins, which could impair cellular functions, and by removing proteins whose functions are no longer required. Therefore, the proteasome participates in numerous cellular processes, including cell cycle progression, apoptosis, or DNA damage repair. In Mus musculus (Mouse), this protein is 26S proteasome non-ATPase regulatory subunit 6 (Psmd6).